A 555-amino-acid chain; its full sequence is Urocanate hydratase (555 aa).

Residues 51–52, Q129, 175–177, E195, R200, 241–242, 262–266, 272–273, and Y321 each bind NAD(+); these read GG, GMG, NA, QTSAH, and YL. C409 is an active-site residue. Residue G491 coordinates NAD(+).

This sequence belongs to the urocanase family. Requires NAD(+) as cofactor.

The protein localises to the cytoplasm. It carries out the reaction 4-imidazolone-5-propanoate = trans-urocanate + H2O. The protein operates within amino-acid degradation; L-histidine degradation into L-glutamate; N-formimidoyl-L-glutamate from L-histidine: step 2/3. In terms of biological role, catalyzes the conversion of urocanate to 4-imidazolone-5-propionate. The polypeptide is Urocanate hydratase (Rhizorhabdus wittichii (strain DSM 6014 / CCUG 31198 / JCM 15750 / NBRC 105917 / EY 4224 / RW1) (Sphingomonas wittichii)).